A 356-amino-acid chain; its full sequence is 1-deoxy-D-xylulose 5-phosphate reductoisomerase (356 aa).

Positions 7, 8, 9, 10, 31, 33, and 111 each coordinate NADPH. Lys-112 contributes to the 1-deoxy-D-xylulose 5-phosphate binding site. Glu-113 lines the NADPH pocket. A Mn(2+)-binding site is contributed by Asp-131. Positions 132, 133, 155, and 178 each coordinate 1-deoxy-D-xylulose 5-phosphate. Glu-133 lines the Mn(2+) pocket. Gly-184 provides a ligand contact to NADPH. 1-deoxy-D-xylulose 5-phosphate is bound by residues Ser-191, Asn-196, Lys-197, and Glu-200. Glu-200 is a Mn(2+) binding site.

Belongs to the DXR family. Mg(2+) serves as cofactor. It depends on Mn(2+) as a cofactor.

It catalyses the reaction 2-C-methyl-D-erythritol 4-phosphate + NADP(+) = 1-deoxy-D-xylulose 5-phosphate + NADPH + H(+). It participates in isoprenoid biosynthesis; isopentenyl diphosphate biosynthesis via DXP pathway; isopentenyl diphosphate from 1-deoxy-D-xylulose 5-phosphate: step 1/6. In terms of biological role, catalyzes the NADPH-dependent rearrangement and reduction of 1-deoxy-D-xylulose-5-phosphate (DXP) to 2-C-methyl-D-erythritol 4-phosphate (MEP). The sequence is that of 1-deoxy-D-xylulose 5-phosphate reductoisomerase from Campylobacter jejuni subsp. doylei (strain ATCC BAA-1458 / RM4099 / 269.97).